We begin with the raw amino-acid sequence, 203 residues long: MTLRSFLIFFLSSLILAGCSSVPESVTSVEWQAHEQRLETIHDFQATGKLGYIGPDQRQSLNFFWKHSTALSQLRLTTVLGQTALKLTITPQGATVETYDDQVLSARNANQLIYRLTGLMMPVDHMPDWLLGLPTDADTFQLSPANTLQTLDKQIGLNDWKIAYERYGDVEWHEQTLPLPNKLKLTTSDVKINLVITKWNITQ.

The N-terminal stretch at 1–18 (MTLRSFLIFFLSSLILAG) is a signal peptide. C19 is lipidated: N-palmitoyl cysteine. The S-diacylglycerol cysteine moiety is linked to residue C19.

This sequence belongs to the LolB family. Monomer.

Its subcellular location is the cell outer membrane. Functionally, plays a critical role in the incorporation of lipoproteins in the outer membrane after they are released by the LolA protein. The sequence is that of Outer-membrane lipoprotein LolB from Vibrio parahaemolyticus serotype O3:K6 (strain RIMD 2210633).